We begin with the raw amino-acid sequence, 366 residues long: Nitronate monooxygenase (366 aa).

FMN contacts are provided by residues N74, Q181, G186, G223, and 242–245 (QLGT).

It belongs to the nitronate monooxygenase family. NMO class I subfamily. Requires FMN as cofactor.

The enzyme catalyses 3 propionate 3-nitronate + 3 O2 + H2O = 3 3-oxopropanoate + 2 nitrate + nitrite + H2O2 + 3 H(+). Functionally, nitronate monooxygenase that uses molecular oxygen to catalyze the oxidative denitrification of alkyl nitronates. Acts on propionate 3-nitronate (P3N), the presumed physiological substrate. Is likely involved in the degradation of P3N, that allows B.phytofirmans PsJN to grow on 3-nitropropionate/P3N as the sole source of nitrogen and carbon. Also probably functions in the detoxification of P3N, a metabolic poison produced by plants and fungi as a defense mechanism. Cannot oxidize nitroalkanes such as 3-nitropropionate, nitroethane, or 1-nitropropane. In Paraburkholderia phytofirmans (strain DSM 17436 / LMG 22146 / PsJN) (Burkholderia phytofirmans), this protein is Nitronate monooxygenase.